A 1078-amino-acid polypeptide reads, in one-letter code: Lon protease homolog, mitochondrial (1078 aa).

Residues 1–27 (MIKASKCNKPRALFLVRVSIPRTFIRN) constitute a mitochondrion transit peptide. Residues 71 to 123 (SEKEKQPSTDKSNDKDKPSRKEKGKDKEKENEEKKDINMDEKYEINEETDTKP) are compositionally biased toward basic and acidic residues. A disordered region spans residues 71–179 (SEKEKQPSTD…KEFLSPSDSG (109 aa)). The segment covering 127 to 157 (PNNPVSSKSNISSSSGGDNNNNNNNNNNNND) has biased composition (low complexity). Basic and acidic residues predominate over residues 158 to 172 (SDGKNDDGSPKDKEF). One can recognise a Lon N-terminal domain in the interval 182 to 400 (PPFLAIAMKD…LSLQLLQVEA (219 aa)). Residue 548 to 555 (GPPGTGKT) coordinates ATP. The disordered stretch occupies residues 792 to 825 (NSPIEYIQSNTEVKAETTTESQQEQEKEKEKDEE). The span at 815 to 825 (EQEKEKEKDEE) shows a compositional bias: basic and acidic residues. One can recognise a Lon proteolytic domain in the interval 861-1049 (TLNPGVATGL…SEVFEHLFQG (189 aa)). Catalysis depends on residues Ser955 and Lys998.

The protein belongs to the peptidase S16 family. In terms of assembly, homohexamer or homoheptamer. Organized in a ring with a central cavity.

The protein resides in the mitochondrion matrix. The enzyme catalyses Hydrolysis of proteins in presence of ATP.. In terms of biological role, ATP-dependent serine protease that mediates the selective degradation of misfolded, unassembled or oxidatively damaged polypeptides as well as certain short-lived regulatory proteins in the mitochondrial matrix. May also have a chaperone function in the assembly of inner membrane protein complexes. Participates in the regulation of mitochondrial gene expression and in the maintenance of the integrity of the mitochondrial genome. Binds to mitochondrial DNA in a site-specific manner. This chain is Lon protease homolog, mitochondrial, found in Candida albicans (strain SC5314 / ATCC MYA-2876) (Yeast).